Consider the following 453-residue polypeptide: Pup--protein ligase (453 aa).

Glu-9 is a Mg(2+) binding site. ATP is bound at residue Arg-53. Tyr-55 serves as a coordination point for Mg(2+). Residue Asp-57 is the Proton acceptor of the active site. Glu-63 is a binding site for Mg(2+). Thr-66 and Trp-420 together coordinate ATP.

It belongs to the Pup ligase/Pup deamidase family. Pup-conjugating enzyme subfamily.

It catalyses the reaction ATP + [prokaryotic ubiquitin-like protein]-L-glutamate + [protein]-L-lysine = ADP + phosphate + N(6)-([prokaryotic ubiquitin-like protein]-gamma-L-glutamyl)-[protein]-L-lysine.. Its pathway is protein degradation; proteasomal Pup-dependent pathway. It functions in the pathway protein modification; protein pupylation. Its function is as follows. Catalyzes the covalent attachment of the prokaryotic ubiquitin-like protein modifier Pup to the proteasomal substrate proteins, thereby targeting them for proteasomal degradation. This tagging system is termed pupylation. The ligation reaction involves the side-chain carboxylate of the C-terminal glutamate of Pup and the side-chain amino group of a substrate lysine. The polypeptide is Pup--protein ligase (Kineococcus radiotolerans (strain ATCC BAA-149 / DSM 14245 / SRS30216)).